Here is a 350-residue protein sequence, read N- to C-terminus: Probable DNA polymerase III subunit delta (350 aa).

The protein belongs to the DNA polymerase HolA subunit family. Component of the DNA clamp loading complex consisting of tau(3):delta(1):delta'(1). The DNA polymerase III holoenzyme complex contains at least 10 different subunits organized into 3 functionally essential subassemblies: the Pol III core, the beta sliding clamp processivity factor and the clamp-loading complex. The Pol III core (subunits alpha, epsilon and theta) contains the polymerase and the 3'-5' exonuclease proofreading activities. The polymerase is tethered to the template via the dimeric beta sliding clamp processivity factor. The DNA clamp-loading complex assembles the beta sliding clamp onto the primed template and plays a central role in the organization and communication at the replication fork.

The enzyme catalyses DNA(n) + a 2'-deoxyribonucleoside 5'-triphosphate = DNA(n+1) + diphosphate. Part of the beta sliding clamp loading complex, which hydrolyzes ATP to load the beta clamp onto primed DNA to form the DNA replication pre-initiation complex. DNA polymerase III is a complex, multichain enzyme responsible for most of the replicative synthesis in bacteria. This DNA polymerase also exhibits 3'-5' exonuclease activity. The delta subunit is the wrench that will open the beta subunit dimer. The DNA clamp loading complex (tau(3),delta,delta') is thought to load beta dimers onto DNA by binding ATP which alters the complex's conformation so it can bind beta sliding clamp dimers and open them at one interface. Primed DNA is recognized, ATP is hydrolyzed releasing the clamp loading complex and closing the beta sliding clamp ring around the primed DNA. The polypeptide is Probable DNA polymerase III subunit delta (Aquifex aeolicus (strain VF5)).